The primary structure comprises 172 residues: Small ribosomal subunit protein uS5 (172 aa).

An S5 DRBM domain is found at 16–79 (LKDRLVAINR…ESAKKNLVKV (64 aa)).

It belongs to the universal ribosomal protein uS5 family. In terms of assembly, part of the 30S ribosomal subunit. Contacts proteins S4 and S8.

With S4 and S12 plays an important role in translational accuracy. In terms of biological role, located at the back of the 30S subunit body where it stabilizes the conformation of the head with respect to the body. The sequence is that of Small ribosomal subunit protein uS5 from Bacteroides thetaiotaomicron (strain ATCC 29148 / DSM 2079 / JCM 5827 / CCUG 10774 / NCTC 10582 / VPI-5482 / E50).